The following is a 396-amino-acid chain: MSEYSVFTSESVSEGHPDKIADQISDAVLDAIIAKDKYARVACETLVKTGVAIIAGEVTTSAWVDLEELVRKVIIDIGYDSSDVGFDGATCGVLNIIGKQSVDINQGVDRAKPEDQGAGDQGLMFGYASNETDVLMPAPICFSHRLVERQAEARKSGLLPWLRPDAKSQVTCRYEGGKVVGIDAVVLSTQHNPEVSYNDLRDGVMELIIKQVLPAELLHKDTQFHINPTGNFVIGGPVGDCGLTGRKIIVDSYGGMARHGGGAFSGKDPSKVDRSAAYAGRYVAKNIVAAGLAERCEIQVSYAIGVAQPTSISINTFGTGKVSDEKIVQLVREHFDLRPYAITKMLDLLHPMYQPTAAYGHFGRHPFELTVDGDTFTAFTWEKTDKAALLRDAAGL.

Histidine 16 contributes to the ATP binding site. Aspartate 18 serves as a coordination point for Mg(2+). Glutamate 44 contributes to the K(+) binding site. Positions 57 and 100 each coordinate L-methionine. Positions 100-110 are flexible loop; that stretch reads QSVDINQGVDR. Residues 165-167, aspartate 240, 246-247, alanine 263, and lysine 267 each bind ATP; these read DAK and RK. Aspartate 240 contributes to the L-methionine binding site. Lysine 271 is an L-methionine binding site.

This sequence belongs to the AdoMet synthase family. As to quaternary structure, homotetramer; dimer of dimers. It depends on Mg(2+) as a cofactor. K(+) is required as a cofactor.

It localises to the cytoplasm. It catalyses the reaction L-methionine + ATP + H2O = S-adenosyl-L-methionine + phosphate + diphosphate. It participates in amino-acid biosynthesis; S-adenosyl-L-methionine biosynthesis; S-adenosyl-L-methionine from L-methionine: step 1/1. Functionally, catalyzes the formation of S-adenosylmethionine (AdoMet) from methionine and ATP. The overall synthetic reaction is composed of two sequential steps, AdoMet formation and the subsequent tripolyphosphate hydrolysis which occurs prior to release of AdoMet from the enzyme. This chain is S-adenosylmethionine synthase, found in Pseudomonas aeruginosa (strain UCBPP-PA14).